The sequence spans 229 residues: Enolase-phosphatase E1 (229 aa).

The protein belongs to the HAD-like hydrolase superfamily. MasA/MtnC family. As to quaternary structure, monomer. Mg(2+) is required as a cofactor.

It carries out the reaction 5-methylsulfanyl-2,3-dioxopentyl phosphate + H2O = 1,2-dihydroxy-5-(methylsulfanyl)pent-1-en-3-one + phosphate. Its pathway is amino-acid biosynthesis; L-methionine biosynthesis via salvage pathway; L-methionine from S-methyl-5-thio-alpha-D-ribose 1-phosphate: step 3/6. It participates in amino-acid biosynthesis; L-methionine biosynthesis via salvage pathway; L-methionine from S-methyl-5-thio-alpha-D-ribose 1-phosphate: step 4/6. In terms of biological role, bifunctional enzyme that catalyzes the enolization of 2,3-diketo-5-methylthiopentyl-1-phosphate (DK-MTP-1-P) into the intermediate 2-hydroxy-3-keto-5-methylthiopentenyl-1-phosphate (HK-MTPenyl-1-P), which is then dephosphorylated to form the acireductone 1,2-dihydroxy-3-keto-5-methylthiopentene (DHK-MTPene). This Pectobacterium atrosepticum (strain SCRI 1043 / ATCC BAA-672) (Erwinia carotovora subsp. atroseptica) protein is Enolase-phosphatase E1.